Here is a 739-residue protein sequence, read N- to C-terminus: RNA-directed RNA polymerase (739 aa).

The 116-residue stretch at proline 452–leucine 567 folds into the RdRp catalytic domain.

It belongs to the tombusviridae RNA polymerase family.

It catalyses the reaction RNA(n) + a ribonucleoside 5'-triphosphate = RNA(n+1) + diphosphate. Its function is as follows. RNA-dependent RNA polymerase that plays an essential role in the virus replication. The polypeptide is RNA-directed RNA polymerase (Pothos latent virus (isolate Pigeonpea/India) (PoLV)).